The chain runs to 129 residues: Antileukoproteinase (129 aa).

The first 22 residues, 1 to 22 (GRGLLPFVLLALGIXAPWAVEG), serve as a signal peptide directing secretion. 2 WAP domains span residues 25-73 (NALK…LNPV) and 79-127 (VKVK…LTPV). Intrachain disulfides connect Cys-32–Cys-61, Cys-40–Cys-65, Cys-48–Cys-60, Cys-54–Cys-69, Cys-86–Cys-115, Cys-93–Cys-119, Cys-102–Cys-114, and Cys-108–Cys-123. The tract at residues 81 to 129 (VKPGKCPVVYGQCMMLNPPNHCKTDSQCLGDLKCCKSMCGKVCLTPVKA) is elastase inhibitory domain.

Interacts with GRN; interaction protects progranulin from proteolysis. Found in pregnant endometrium and myometrium, placenta, allantoic fluids, fetal cord blood, and fetal liver. Also found in uterus and lung.

The protein localises to the secreted. In terms of biological role, acid-stable proteinase inhibitor with strong affinities for trypsin, chymotrypsin, elastase, and cathepsin G. Modulates the inflammatory and immune responses after bacterial infection, and after infection by the intracellular parasite L.major. Down-regulates responses to bacterial lipopolysaccharide (LPS). Plays a role in regulating the activation of NF-kappa-B and inflammatory responses. Has antimicrobial activity against mycobacteria, but not against salmonella. Contributes to normal resistance against infection by M.tuberculosis. Required for normal resistance to infection by L.major. Required for normal wound healing, probably by preventing tissue damage by limiting protease activity. Together with ELANE, required for normal differentiation and proliferation of bone marrow myeloid cells. This Sus scrofa (Pig) protein is Antileukoproteinase (SLPI).